A 415-amino-acid chain; its full sequence is Sucrose permease (415 aa).

The Cytoplasmic segment spans residues 1 to 16 (MALNIPFRNAYYRFAS). Residues 17 to 37 (SYSFLFFISWSLWWSLYAIWL) form a helical membrane-spanning segment. At 38 to 48 (KGHLGLTGTEL) the chain is on the periplasmic side. A helical membrane pass occupies residues 49-69 (GTLYSVNQFTSILFMMFYGIV). Topologically, residues 70 to 77 (QDKLGLKK) are cytoplasmic. A helical membrane pass occupies residues 78–98 (PLIWCMSFILVLTGPFMIYVY). Over 99-107 (EPLLQSNFS) the chain is Periplasmic. The helical transmembrane segment at 108–128 (VGLILGALFFGLGYLAGCGLL) threads the bilayer. Residues 129–147 (DSFTEKMARNFHFEYGTAR) are Cytoplasmic-facing. The helical transmembrane segment at 148 to 167 (AWGSFGYAIGAFFAGIFFSI) threads the bilayer. The Periplasmic portion of the chain corresponds to 168–170 (SPH). A helical transmembrane segment spans residues 171-190 (INFWLVSLFGAVFMMINMRF). Residues 191 to 220 (KDKDHQCIAADAGGVKKEDFIAVFKDRNFW) lie on the Cytoplasmic side of the membrane. A helical transmembrane segment spans residues 221-241 (VFVIFIVGTWSFYNIFDQQLF). Topologically, residues 242 to 260 (PVFYAGLFESHDVGTRLYG) are periplasmic. A helical membrane pass occupies residues 261-281 (YLNSFQVVLEALCMAIIPFFV). At 282–287 (NRVGPK) the chain is on the cytoplasmic side. A helical transmembrane segment spans residues 288-308 (NALLIGVVIMALRILSCALFV). Residues 309–311 (NPW) are Periplasmic-facing. Residues 312 to 332 (IISLVKLLHAIEVPLCVISVF) form a helical membrane-spanning segment. At 333 to 342 (KYSVANFDKR) the chain is on the cytoplasmic side. A helical transmembrane segment spans residues 343–363 (LSSTIFLIGFQIASSLGIVLL). Residues 364 to 377 (STPTGILFDHAGYQ) are Periplasmic-facing. The helical transmembrane segment at 378 to 398 (TVFFAISGIVCLMLLFGIFFL) threads the bilayer. Over 399–415 (SKKREQIVMETPVPSAI) the chain is Cytoplasmic.

This sequence belongs to the major facilitator superfamily. Oligosaccharide:H(+) symporter (OHS) (TC 2.A.1.5) family.

The protein resides in the cell inner membrane. Its pathway is glycan biosynthesis; sucrose metabolism. In terms of biological role, responsible for transport of sucrose into the cell, with the concomitant import of a proton (symport system). Can also transport maltose, fructose or lactulose, but not glucose, lactose or melibiose. The substrate specificity is directed toward the fructofuranosyl moiety of the substrate. The protein is Sucrose permease of Escherichia coli.